The following is a 121-amino-acid chain: UPF0212 protein VNG_0879C (121 aa).

This sequence belongs to the UPF0212 family.

The polypeptide is UPF0212 protein VNG_0879C (Halobacterium salinarum (strain ATCC 700922 / JCM 11081 / NRC-1) (Halobacterium halobium)).